The chain runs to 368 residues: Phosphate acyltransferase (368 aa).

The protein belongs to the PlsX family. Homodimer. Probably interacts with PlsY.

It is found in the cytoplasm. The enzyme catalyses a fatty acyl-[ACP] + phosphate = an acyl phosphate + holo-[ACP]. It participates in lipid metabolism; phospholipid metabolism. Its function is as follows. Catalyzes the reversible formation of acyl-phosphate (acyl-PO(4)) from acyl-[acyl-carrier-protein] (acyl-ACP). This enzyme utilizes acyl-ACP as fatty acyl donor, but not acyl-CoA. The sequence is that of Phosphate acyltransferase from Granulibacter bethesdensis (strain ATCC BAA-1260 / CGDNIH1).